Reading from the N-terminus, the 109-residue chain is Cell division protein ZapA (109 aa).

Residues 21–99 adopt a coiled-coil conformation; the sequence is PEQLDALNQA…IEQALLEQGR (79 aa).

This sequence belongs to the ZapA family. Type 1 subfamily. Homodimer. Interacts with FtsZ.

The protein localises to the cytoplasm. Its function is as follows. Activator of cell division through the inhibition of FtsZ GTPase activity, therefore promoting FtsZ assembly into bundles of protofilaments necessary for the formation of the division Z ring. It is recruited early at mid-cell but it is not essential for cell division. In Edwardsiella ictaluri (strain 93-146), this protein is Cell division protein ZapA.